The chain runs to 140 residues: Large ribosomal subunit protein bL17 (140 aa).

The protein belongs to the bacterial ribosomal protein bL17 family. As to quaternary structure, part of the 50S ribosomal subunit. Contacts protein L32.

The sequence is that of Large ribosomal subunit protein bL17 from Beijerinckia indica subsp. indica (strain ATCC 9039 / DSM 1715 / NCIMB 8712).